The following is a 260-amino-acid chain: Uroplakin-1b (260 aa).

Topologically, residues 1–15 (MAKDDSTVRCFQGLL) are cytoplasmic. The helical transmembrane segment at 16 to 36 (IFGHVIVGMCGIALTAECIFF) threads the bilayer. At 37-59 (VSDQHSLYPLLEATNNDDIFGAA) the chain is on the extracellular side. Residues 60–80 (WIGMFVGICLFCLSVLAIVGI) traverse the membrane as a helical segment. At 81-86 (MKSNRK) the chain is on the cytoplasmic side. The helical transmembrane segment at 87–107 (ILLAYFIMMFIVYGFEVASCI) threads the bilayer. Residues 108–229 (TAATQRDFFT…ELISGPMDRH (122 aa)) are Extracellular-facing. Residues 230–250 (AWGVAWFGFAILCWTFWVLLG) form a helical membrane-spanning segment. The Cytoplasmic segment spans residues 251–260 (TMFYWSRIEY).

This sequence belongs to the tetraspanin (TM4SF) family. In terms of assembly, heterodimer with uroplakin-3A (UPK3A) or uroplakin-3B (UPK3B). Post-translationally, N-glycosylated with high-mannose oligosaccharides.

It is found in the membrane. Component of the asymmetric unit membrane (AUM); a highly specialized biomembrane elaborated by terminally differentiated urothelial cells. May play an important role in normal bladder epithelial physiology, possibly in regulating membrane permeability of superficial umbrella cells or in stabilizing the apical membrane through AUM/cytoskeletal interactions. This chain is Uroplakin-1b (Upk1b), found in Rattus norvegicus (Rat).